The sequence spans 230 residues: uncharacterized protein (230 aa).

The next 7 membrane-spanning stretches (helical) occupy residues 34–54 (FFAG…MNFQ), 56–76 (VVQY…GLMF), 87–107 (MLFA…GMVI), 111–131 (GLGA…LMSV), 146–166 (MLFI…FLGS), 167–187 (PMFQ…YIAY), and 205–225 (VSLY…IGIF).

It belongs to the BI1 family.

The protein localises to the cell membrane. This is an uncharacterized protein from Helicobacter pylori (strain J99 / ATCC 700824) (Campylobacter pylori J99).